Here is a 145-residue protein sequence, read N- to C-terminus: 3-dehydroquinate dehydratase (145 aa).

Y22 acts as the Proton acceptor in catalysis. Positions 74, 80, and 87 each coordinate substrate. Catalysis depends on H100, which acts as the Proton donor. Residues 101–102 (IS) and R111 contribute to the substrate site.

The protein belongs to the type-II 3-dehydroquinase family. In terms of assembly, homododecamer.

The catalysed reaction is 3-dehydroquinate = 3-dehydroshikimate + H2O. It participates in metabolic intermediate biosynthesis; chorismate biosynthesis; chorismate from D-erythrose 4-phosphate and phosphoenolpyruvate: step 3/7. In terms of biological role, catalyzes a trans-dehydration via an enolate intermediate. The chain is 3-dehydroquinate dehydratase from Lachnoclostridium phytofermentans (strain ATCC 700394 / DSM 18823 / ISDg) (Clostridium phytofermentans).